A 130-amino-acid chain; its full sequence is Small ribosomal subunit protein uS8A (130 aa).

The protein belongs to the universal ribosomal protein uS8 family. Component of the small ribosomal subunit (SSU). Mature yeast ribosomes consist of a small (40S) and a large (60S) subunit. The 40S small subunit contains 1 molecule of ribosomal RNA (18S rRNA) and 33 different proteins (encoded by 57 genes). The large 60S subunit contains 3 rRNA molecules (25S, 5.8S and 5S rRNA) and 46 different proteins (encoded by 81 genes).

The protein resides in the cytoplasm. Component of the ribosome, a large ribonucleoprotein complex responsible for the synthesis of proteins in the cell. The small ribosomal subunit (SSU) binds messenger RNAs (mRNAs) and translates the encoded message by selecting cognate aminoacyl-transfer RNA (tRNA) molecules. The large subunit (LSU) contains the ribosomal catalytic site termed the peptidyl transferase center (PTC), which catalyzes the formation of peptide bonds, thereby polymerizing the amino acids delivered by tRNAs into a polypeptide chain. The nascent polypeptides leave the ribosome through a tunnel in the LSU and interact with protein factors that function in enzymatic processing, targeting, and the membrane insertion of nascent chains at the exit of the ribosomal tunnel. In Saccharomyces cerevisiae (strain ATCC 204508 / S288c) (Baker's yeast), this protein is Small ribosomal subunit protein uS8A.